Here is a 306-residue protein sequence, read N- to C-terminus: uncharacterized protein (306 aa).

The next 9 membrane-spanning stretches (helical) occupy residues 13–33 (VLLS…FAFI), 53–73 (PLPM…FAWG), 86–106 (ITGL…IWAA), 112–132 (VGLT…IVPL), 147–167 (WGMM…GMLF), 177–197 (AFVS…VIAI), 214–234 (AGIA…AWLI), 246–268 (VSLI…VTFF), and 272–294 (VAVP…GYML).

It is found in the cell membrane. This is an uncharacterized protein from Bacillus subtilis (strain 168).